A 434-amino-acid chain; its full sequence is T-box transcription factor T homolog (434 aa).

A DNA-binding region (T-box) is located at residues 50–220; that stretch reads LWKKFHKLTN…YNPFAKAFLD (171 aa). Composition is skewed to polar residues over residues 355 to 364 and 376 to 385; these read SGFSHVSSPQ and HPTSSHQHNL. The segment at 355 to 385 is disordered; the sequence is SGFSHVSSPQSPLPTGLFRNPHPTSSHQHNL.

In the developing embryo, expressed in the mesenchyme founder cells, vegetal plate of the mesenchyme blastula, extending tip of the invaginating archenteron and, later, in the secondary mesenchyme cells.

Its subcellular location is the nucleus. In terms of biological role, involved in the transcriptional regulation of genes required for mesoderm differentiation. The chain is T-box transcription factor T homolog from Hemicentrotus pulcherrimus (Sea urchin).